The chain runs to 333 residues: MSEKHLTYADSGVDIKEEEKTVKTLIDKLSYVRKGIGAPLTGIGHYAGLLDFGEYALAMTTDGVGSKVLIANEMQRWNTVGIDCIAMNVNDLLAIGAEPVAFVDYLALEKHEEGFAEQIGEGLLKGAEISRMSIVGGETATLPDIIKGFDLAGTCLGYLKKEDIIEGGRVRVGDVIVGIPSTGVHSNGYTLVRKIIQESGYSYHDPCPYDSSKTIGDDLLEPTRIYIEVLDVLKACEVHGLAHITGSGLLKLRRVTKLGFDFYDPLEPQEIFKFLRKEGGVDDLEMYRTFNMGMGFLIILPEKDAEKAAEITGGKIVGKIVESGIRVKDLVIE.

This sequence belongs to the AIR synthase family.

Its subcellular location is the cytoplasm. The catalysed reaction is 2-formamido-N(1)-(5-O-phospho-beta-D-ribosyl)acetamidine + ATP = 5-amino-1-(5-phospho-beta-D-ribosyl)imidazole + ADP + phosphate + H(+). It functions in the pathway purine metabolism; IMP biosynthesis via de novo pathway; 5-amino-1-(5-phospho-D-ribosyl)imidazole from N(2)-formyl-N(1)-(5-phospho-D-ribosyl)glycinamide: step 2/2. The polypeptide is Phosphoribosylformylglycinamidine cyclo-ligase (Methanosarcina mazei (strain ATCC BAA-159 / DSM 3647 / Goe1 / Go1 / JCM 11833 / OCM 88) (Methanosarcina frisia)).